The sequence spans 368 residues: Phospho-N-acetylmuramoyl-pentapeptide-transferase (368 aa).

The next 9 helical transmembrane spans lie at 23-43 (YITF…LVFG), 72-92 (IPTM…LLWA), 94-114 (IAEP…AVGF), 139-159 (VALG…SVLL), 170-190 (ITVD…TAVS), 201-221 (GLAA…AYLT), 238-258 (AGEV…FLWF), 265-286 (VFMG…ALLI), and 345-365 (KIVI…LLTL).

Belongs to the glycosyltransferase 4 family. MraY subfamily. The cofactor is Mg(2+).

It localises to the cell inner membrane. The enzyme catalyses UDP-N-acetyl-alpha-D-muramoyl-L-alanyl-gamma-D-glutamyl-meso-2,6-diaminopimeloyl-D-alanyl-D-alanine + di-trans,octa-cis-undecaprenyl phosphate = di-trans,octa-cis-undecaprenyl diphospho-N-acetyl-alpha-D-muramoyl-L-alanyl-D-glutamyl-meso-2,6-diaminopimeloyl-D-alanyl-D-alanine + UMP. It functions in the pathway cell wall biogenesis; peptidoglycan biosynthesis. Its function is as follows. Catalyzes the initial step of the lipid cycle reactions in the biosynthesis of the cell wall peptidoglycan: transfers peptidoglycan precursor phospho-MurNAc-pentapeptide from UDP-MurNAc-pentapeptide onto the lipid carrier undecaprenyl phosphate, yielding undecaprenyl-pyrophosphoryl-MurNAc-pentapeptide, known as lipid I. In Chloroherpeton thalassium (strain ATCC 35110 / GB-78), this protein is Phospho-N-acetylmuramoyl-pentapeptide-transferase.